The primary structure comprises 284 residues: Pantothenate synthetase (284 aa).

Residue 30–37 (MGNLHEGH) participates in ATP binding. The active-site Proton donor is the H37. Q61 lines the (R)-pantoate pocket. A beta-alanine-binding site is contributed by Q61. 149-152 (GEKD) is an ATP binding site. A (R)-pantoate-binding site is contributed by Q155. ATP contacts are provided by residues V178 and 186 to 189 (LSSR).

The protein belongs to the pantothenate synthetase family. As to quaternary structure, homodimer.

Its subcellular location is the cytoplasm. It catalyses the reaction (R)-pantoate + beta-alanine + ATP = (R)-pantothenate + AMP + diphosphate + H(+). It functions in the pathway cofactor biosynthesis; (R)-pantothenate biosynthesis; (R)-pantothenate from (R)-pantoate and beta-alanine: step 1/1. Its function is as follows. Catalyzes the condensation of pantoate with beta-alanine in an ATP-dependent reaction via a pantoyl-adenylate intermediate. The sequence is that of Pantothenate synthetase from Yersinia enterocolitica serotype O:8 / biotype 1B (strain NCTC 13174 / 8081).